We begin with the raw amino-acid sequence, 423 residues long: MPRSFLVKSKKAHSYHQPRSPGPDYSLRLETVPVPGRADGGAVSAGESKMEPRERLSPESQLTEAPDRASASPNSCEGSVCDPSSEFEDYWRPPSPSVSPASEKSLCRSLDEAQPYTLPFKPYAWSGLAGSDLRHLVQSYRQCSALERSAGLSLFCERGAESGRPAARYGSEQAAGGAGAGQPGSCGAASGATSAGGLGLYGDFAPAAAGLFERPSTAAGRLYQDRGHELHADKSVGVKVESELLCTRLLLGGGSYKCIKCSKVFSTPHGLEVHVRRSHSGTRPFACEMCGKTFGHAVSLEQHKAVHSQERSFDCKICGKSFKRSSTLSTHLLIHSDTRPYPCQYCGKRFHQKSDMKKHTFIHTGEKPHKCQVCGKAFSQSSNLITHSRKHTGFKPFGCDLCGKGFQRKVDLRRHRETQHGLK.

The segment at 1 to 20 is SNAG domain; sequence MPRSFLVKSKKAHSYHQPRS. The disordered stretch occupies residues 1-102; sequence MPRSFLVKSK…PPSPSVSPAS (102 aa). Phosphoserine occurs at positions 20 and 57. A compositionally biased stretch (basic and acidic residues) spans 48–57; it reads SKMEPRERLS. The tract at residues 141 to 258 is required for interaction with RELA; that stretch reads RQCSALERSA…LLLGGGSYKC (118 aa). 6 consecutive C2H2-type zinc fingers follow at residues 256-279, 285-307, 313-335, 341-363, 369-391, and 397-420; these read YKCI…RRSH, FACE…KAVH, FDCK…LLIH, YPCQ…TFIH, HKCQ…SRKH, and FGCD…ETQH.

As to quaternary structure, interacts with U2AF1L4. Component of RCOR-GFI-KDM1A-HDAC complexes. Interacts directly with RCOR1, KDM1A and HDAC2. Also interacts with HDAC1. regions. Interacts (via the zinc-finger domain) with ARIH2; the interaction prevents GFI1 ubiquitination and proteasomal degradation. Interacts with PIAS3; the interaction relieves the inhibitory effect of PIAS3 on STAT3-mediated transcriptional activity. Forms a complex with EHMT2 and HDAC1 to promote 'Lys-9' dimethylation of H3 (H3K9Me2) and repress expression of target genes. Interacts directly with EHMT2. Component of the GFI1-AJUBA-HDAC1 repressor complex. Interacts directly with AJUBA (via ITS LIM domains); the interaction results in the HDAC-dependent corepression of a subset of GFI1 target genes and, occurs independent of the SNAG domain. Interacts with SPI1; the interaction inhibits SPI1 transcriptional activity targeted at macrophage-specific genes, repressing macrophage differentiation of myeloid progenitor cells and promoting granulocyte commitment. Interacts with RUNX1T1; the interaction represses HDAC-mediated transcriptional activity. Interacts with RELA; the interaction occurs on liposaccharide (LPS) stimulation controls RELA DNA binding activity and regulates endotoxin-mediated TOLL-like receptor inflammatory response. Interacts (via the C-terminal zinc fingers) with ZBTB17; the interaction results in the recruitment of GFI1 to the CDKN1A/p21 promoter and repression of CDKN1A/p21 transcription. Ubiquitinated. Restricted to lymphoid tissues and testes in adult animals.

It is found in the nucleus. In terms of biological role, transcription repressor essential for hematopoiesis. Functions in a cell-context and development-specific manner. Binds to 5'-TAAATCAC[AT]GCA-3' in the promoter region of a large number of genes. Component of several complexes, including the EHMT2-GFI1-HDAC1, AJUBA-GFI1-HDAC1 and RCOR-GFI-KDM1A-HDAC complexes, that suppress, via histone deacetylase (HDAC) recruitment, a number of genes implicated in multilineage blood cell development. Regulates neutrophil differentiation, promotes proliferation of lymphoid cells, and is required for granulocyte development. Inhibits SPI1 transcriptional activity at macrophage-specific genes, repressing macrophage differentiation of myeloid progenitor cells and promoting granulocyte commitment. Mediates, together with U2AF1L4, the alternative splicing of CD45 and controls T-cell receptor signaling. Regulates the endotoxin-mediated Toll-like receptor (TLR) inflammatory response by antagonizing RELA. Cooperates with CBFA2T2 to regulate ITGB1-dependent neurite growth. Controls cell-cycle progression by repressing CDKNIA/p21 transcription in response to TGFB1 via recruitment of GFI1 by ZBTB17 to the CDKNIA/p21 and CDKNIB promoters. Required for the maintenance of inner ear hair cells. In addition to its role in transcription, acts as a substrate adapter for PRMT1 in the DNA damage response: facilitates the recognition of TP53BP1 and MRE11 substrates by PRMT1, promoting their methylation and the DNA damage response. The protein is Zinc finger protein Gfi-1 (Gfi1) of Rattus norvegicus (Rat).